The chain runs to 794 residues: Protein argonaute-4 (794 aa).

One can recognise a PAZ domain in the interval 152–271 (PIIEFMCEVL…LPLEVCNIVA (120 aa)). The 312-residue stretch at 442–753 (LIVVILPGKT…VAFRARYHLV (312 aa)) folds into the Piwi domain. Positions 758-779 (DSAEGSHVSGQSNGRDPQALAK) are disordered.

Belongs to the argonaute family. Ago subfamily.

Its subcellular location is the cytoplasm. The protein localises to the P-body. Functionally, required for RNA-mediated gene silencing (RNAi). Binds to short RNAs such as microRNAs (miRNAs) and represses the translation of mRNAs which are complementary to them. Lacks endonuclease activity and does not appear to cleave target mRNAs. The polypeptide is Protein argonaute-4 (AGO4) (Gallus gallus (Chicken)).